Here is a 343-residue protein sequence, read N- to C-terminus: MTLKGKKVTVHDMTLRDGMHPKRHLMTLDQMTAIATGLDAAGVPLIEVTHGDGLGGSSVNYGFPAHTDEEYLGAVIPKMKNAKVSALLLPGIGTVDHLKMARDLGVHTIRVATHCTEADVSEQHITMARKLEMDTVGFLMMAHMNSAEGLVKQAKLMESYGANCIYVTDSAGHLLPEGVKERLSAVRAALKPETELGFHGHHNLAMGVANSIAAIEVGANRIDAAAAGLGAGAGNTPMEVLIAVCSLMGIETGVDVAKITDVAEDLVVPMMDFPIRIDRDALTLGYAGVYGSFLLFAKRASAKYGVPARDILVELGRRGMVGGQEDMIEDTAITMARERGLLK.

In terms of domain architecture, Pyruvate carboxyltransferase spans V8 to T260. R16–D17 is a binding site for substrate. D17 contacts Mn(2+). H20 acts as the Proton acceptor in catalysis. S170 and H199 together coordinate substrate. Residues H199 and H201 each contribute to the Mn(2+) site. Residue Y290 coordinates substrate.

Belongs to the 4-hydroxy-2-oxovalerate aldolase family.

It catalyses the reaction (S)-4-hydroxy-2-oxopentanoate = acetaldehyde + pyruvate. The polypeptide is 4-hydroxy-2-oxovalerate aldolase 4 (Dechloromonas aromatica (strain RCB)).